A 107-amino-acid chain; its full sequence is Keratin, type I cytoskeletal 20 (107 aa).

A head region spans residues 1–7; that stretch reads GNLWVGN. The segment at 8-43 is coil 1A; sequence EKMTMKNLNDRLASYLEKVRSLEQSNSKFELQIKQW. The IF rod domain occupies 8-107; sequence EKMTMKNLND…ETERGIRLAV (100 aa). The segment at 44–61 is linker 1; sequence YESNTPGISRDHSAYLQQ. Positions 62–107 are coil 1B; that stretch reads IQDLRNQIRDAQLQNARCVLQIDNAKLAAEDFRLKYETERGIRLAV.

This sequence belongs to the intermediate filament family. In terms of assembly, heterotetramer of two type I and two type II keratins. Associates with KRT8.

In terms of biological role, plays a significant role in maintaining keratin filament organization in intestinal epithelia. When phosphorylated, plays a role in the secretion of mucin in the small intestine. This is Keratin, type I cytoskeletal 20 from Sus scrofa (Pig).